A 180-amino-acid polypeptide reads, in one-letter code: Cell wall / vacuolar inhibitor of fructosidase 2 (180 aa).

Residues methionine 1–alanine 23 form the signal peptide. N-linked (GlcNAc...) asparagine glycosylation occurs at asparagine 26. Residues cysteine 35 and cysteine 44 are joined by a disulfide bond. Residues asparagine 73 and asparagine 84 are each glycosylated (N-linked (GlcNAc...) asparagine). A disulfide bond links cysteine 101 and cysteine 141.

The protein belongs to the PMEI family. In terms of tissue distribution, mostly expressed at low levels in seedlings, stems, leaves and flowers (in all organs), and, to a lower extent, in roots and siliques.

It localises to the vacuole. Its function is as follows. Inhibits fructosidases from both cell wall (cell wall invertase CWI) and vacuoles (vacuolar invertase VI). This is Cell wall / vacuolar inhibitor of fructosidase 2 (C/VIF2) from Arabidopsis thaliana (Mouse-ear cress).